The sequence spans 104 residues: Phosphoribosyl-ATP pyrophosphatase (104 aa).

This sequence belongs to the PRA-PH family.

Its subcellular location is the cytoplasm. It carries out the reaction 1-(5-phospho-beta-D-ribosyl)-ATP + H2O = 1-(5-phospho-beta-D-ribosyl)-5'-AMP + diphosphate + H(+). Its pathway is amino-acid biosynthesis; L-histidine biosynthesis; L-histidine from 5-phospho-alpha-D-ribose 1-diphosphate: step 2/9. In Nitrosococcus oceani (strain ATCC 19707 / BCRC 17464 / JCM 30415 / NCIMB 11848 / C-107), this protein is Phosphoribosyl-ATP pyrophosphatase.